Consider the following 90-residue polypeptide: Probable Fe(2+)-trafficking protein (90 aa).

It belongs to the Fe(2+)-trafficking protein family.

Functionally, could be a mediator in iron transactions between iron acquisition and iron-requiring processes, such as synthesis and/or repair of Fe-S clusters in biosynthetic enzymes. The polypeptide is Probable Fe(2+)-trafficking protein (Bordetella avium (strain 197N)).